We begin with the raw amino-acid sequence, 1602 residues long: MVDASGRAAAEGWRKMEAPPDGAADLVPLDRYDAARAKIAANLQWICAKAYGRDNIPEDLRDPFYVDQYEQEHIKPPVIKLLLSSELYCRVCSLILKGDQVAALQGHQSVIQALSRKGIYVMESDDTPVTESDLSRAPIKMSAHMAMVDALMMAYTVEMISIEKVVASVKRFSTFSASKELPYDLEDAMVFWINKVNLKMREITEKEVKLKQQLLESPAHQKVRYRREHLSARQSPYFPLLEDLMRDGSDGAALLAVIHYYCPEQMKLDDICLKEVTSMADSLYNIRLLREFSNEYLNKCFYLTLEDMLYAPLVLKPNVMVFIAELFWWFENVKPDFVQPRDVQELKDAKTVLHQKSSRPPVPISNATKRSFLGSPAAGTLAELQPPVQLPAEGCHRHYLHPEEPEYLGKGTAAFSPSHPLLPLRQKQQKSIQGEDIPDQRHRSNSLTRVDGQPRGAAIAWPEKKTRPASQPTPFALHHAASCEVDPSSGDSISLARSISKDSLASNIVNLTPQNQPHPTATKSHGKSLLSNVSIEDEEEELVAIVRADVVPQQADPEFPRASPRALGLTANARSPQGQLDTSESKPDSFFLEPLMPAVLKPAKEKQVITKEDERGEGRPRSIVSRRPSEGPQPLVRRKMTGSRDLNRTFTPIPCSEFPMGIDPTETGPLSVETAGEVCGGPLALGGFDPFPQGPSTDGFFLHVGRADEDTEGRLYVSCSKSPNSHDSEPWTLLRQDSDSDVVDIEEAEHDFMGEAHPVVFSRYIGEEESAKLQEDMKVKEHEDKDDASGRSSPCLSTASQMSSVSMASGSVKMTSFAERKLQRLNSCETKSSTSSSQKTTPDASESCPAPLTTWRQKREQSPSQHGKDPASLLASELVQLHMQLEEKRRAIEAQKKKMEALSARQRLKLGKAAFLHVVKKGKAEAAPPLRPEHFAKEYSQHNGEDCGDAVSKTEDFLVKEEQREELLHEPQDVDKESLAFAQQHKAKDPVALHELERNKVISAALLEDTVGEVVDVNECDLSIEKLNETISTLQQAILKISQQQEQLLMKSPTVPVPGSKNNSQDHKVKAPVHFVEPLSPTGVAGHRKAPRLGQGRNSRSGRPAELKVPKDRPQGSSRSKTPTPSVETLPHLRPFPASSHPRTPTDPGLDSALEPSGDPHGKCLFDSYRLHDESNQRTLTLSSSKDANILSEQMSLKEVLDASVKEVGSSSSDVSGKESVPVEEPLRSRASLIEVDLSDLKAPDEDGELVSLDGSADLVSEGDQKPGVGFFFKDEQKAEDELAKKRAAFLLKQQRKAEEARVRKQQLEAEVELKRDEARRKAEEDRVRKEEEKARRELIKQEYLRRKQQQILEEQGLGKPKSKPKKPRPKSVHREESCSDSGTKCSSTPDNLSRTQSGSSLSLASAATTEPESVHSGGTPSQRVESMEALPILSRNPSRSTDRDWETASAASSLASVAEYTGPKLFKEPSSKSNKPIIHNAISHCCLAGKVNEPHKNSILEELEKCDANHYIILFRDAGCQFRALYCYYPDTEEIYKLTGTGPKNITKKMIDKLYKYSSDRKQFNLIPAKTMSVSVDALTIHNHLWQPKRPAVPKKAQTRK.

The Calponin-homology (CH) domain occupies 216 to 331 (ESPAHQKVRY…FIAELFWWFE (116 aa)). A phosphoserine mark is found at Ser-217, Ser-371, Ser-375, Ser-416, and Ser-431. The tract at residues 426–471 (QKQQKSIQGEDIPDQRHRSNSLTRVDGQPRGAAIAWPEKKTRPASQ) is disordered. Thr-512 is subject to Phosphothreonine. A phosphoserine mark is found at Ser-563, Ser-575, and Ser-589. Positions 603–620 (AKEKQVITKEDERGEGRP) are enriched in basic and acidic residues. The segment at 603 to 637 (AKEKQVITKEDERGEGRPRSIVSRRPSEGPQPLVR) is disordered. Phosphoserine occurs at positions 629, 722, 728, 738, and 740. The segment covering 772-789 (KLQEDMKVKEHEDKDDAS) has biased composition (basic and acidic residues). Disordered stretches follow at residues 772 to 808 (KLQEDMKVKEHEDKDDASGRSSPCLSTASQMSSVSMA) and 825 to 870 (LNSC…GKDP). 2 stretches are compositionally biased toward low complexity: residues 797-808 (STASQMSSVSMA) and 830-841 (TKSSTSSSQKTT). The span at 857–869 (QKREQSPSQHGKD) shows a compositional bias: basic and acidic residues. The tract at residues 871-892 (ASLLASELVQLHMQLEEKRRAI) is sufficient for interaction with SPTBN1. Coiled coils occupy residues 873–909 (LLASELVQLHMQLEEKRRAIEAQKKKMEALSARQRLK) and 1016–1048 (DVNECDLSIEKLNETISTLQQAILKISQQQEQL). The segment at 903–922 (SARQRLKLGKAAFLHVVKKG) is sufficient for interaction with calmodulin. 3 disordered regions span residues 1075–1165 (FVEP…GKCL), 1206–1226 (KEVGSSSSDVSGKESVPVEEP), and 1301–1448 (ARVR…DWET). Position 1080 is a phosphoserine (Ser-1080). Basic and acidic residues predominate over residues 1103 to 1114 (RPAELKVPKDRP). A compositionally biased stretch (polar residues) spans 1115-1127 (QGSSRSKTPTPSV). Over residues 1206 to 1220 (KEVGSSSSDVSGKES) the composition is skewed to low complexity. A coiled-coil region spans residues 1291–1343 (LLKQQRKAEEARVRKQQLEAEVELKRDEARRKAEEDRVRKEEEKARRELIKQE). A compositionally biased stretch (basic and acidic residues) spans 1301-1346 (ARVRKQQLEAEVELKRDEARRKAEEDRVRKEEEKARRELIKQEYLR). Over residues 1361 to 1372 (PKSKPKKPRPKS) the composition is skewed to basic residues. Residues 1380 to 1392 (SDSGTKCSSTPDN) show a composition bias toward polar residues. The segment covering 1393-1410 (LSRTQSGSSLSLASAATT) has biased composition (low complexity). Residues Ser-1398 and Ser-1427 each carry the phosphoserine modification. A CKK domain is found at 1463–1597 (GPKLFKEPSS…QPKRPAVPKK (135 aa)). Tyr-1537 carries the post-translational modification Phosphotyrosine.

This sequence belongs to the CAMSAP1 family. In terms of assembly, interacts with spectrin via SPTBN1; the interaction is direct. Interacts with calmodulin; calcium-dependent it prevents interaction with spectrin.

Its subcellular location is the cytoplasm. The protein localises to the cytoskeleton. Key microtubule-organizing protein that specifically binds the minus-end of non-centrosomal microtubules and regulates their dynamics and organization. Specifically recognizes growing microtubule minus-ends and stabilizes microtubules. Acts on free microtubule minus-ends that are not capped by microtubule-nucleating proteins or other factors and protects microtubule minus-ends from depolymerization. In contrast to CAMSAP2 and CAMSAP3, tracks along the growing tips of minus-end microtubules without significantly affecting the polymerization rate: binds at the very tip of the microtubules minus-end and acts as a minus-end tracking protein (-TIP) that dissociates from microtubules after allowing tubulin incorporation. Through interaction with spectrin may regulate neurite outgrowth. This chain is Calmodulin-regulated spectrin-associated protein 1 (CAMSAP1), found in Homo sapiens (Human).